We begin with the raw amino-acid sequence, 338 residues long: Serpentine receptor class alpha-32 (338 aa).

7 consecutive transmembrane segments (helical) span residues 30-50, 63-83, 120-140, 152-172, 199-219, 249-269, and 289-309; these read VYVIYIDLVLILALFLSIHAI, ITHLLIASLVYGNVHNASYTI, RFLFIAIELALNVDRIIVILF, GEILNILAVILSFALGCLLHL, LTSYTILSACCAALDFLMMWY, LNSLLQLFVTSIYAISMFVLA, and TTPYSTLLVPIQIKVFIQWIG.

This sequence belongs to the nematode receptor-like protein sra family.

It localises to the membrane. The protein is Serpentine receptor class alpha-32 (sra-32) of Caenorhabditis elegans.